A 195-amino-acid polypeptide reads, in one-letter code: Imidazoleglycerol-phosphate dehydratase (195 aa).

This sequence belongs to the imidazoleglycerol-phosphate dehydratase family.

Its subcellular location is the cytoplasm. It carries out the reaction D-erythro-1-(imidazol-4-yl)glycerol 3-phosphate = 3-(imidazol-4-yl)-2-oxopropyl phosphate + H2O. It functions in the pathway amino-acid biosynthesis; L-histidine biosynthesis; L-histidine from 5-phospho-alpha-D-ribose 1-diphosphate: step 6/9. This Burkholderia mallei (strain NCTC 10247) protein is Imidazoleglycerol-phosphate dehydratase.